The chain runs to 325 residues: 6-phosphogluconolactonase 3, chloroplastic (325 aa).

Residues methionine 1 to lysine 68 constitute a chloroplast transit peptide. The disordered stretch occupies residues serine 51–threonine 73. A Microbody targeting signal motif is present at residues serine 323–leucine 325.

The protein belongs to the glucosamine/galactosamine-6-phosphate isomerase family. 6-phosphogluconolactonase subfamily. As to quaternary structure, interacts with TRXM2. As to expression, expressed in roots, leaves and shoots.

It localises to the plastid. The protein localises to the chloroplast. It is found in the peroxisome. The catalysed reaction is 6-phospho-D-glucono-1,5-lactone + H2O = 6-phospho-D-gluconate + H(+). The protein operates within carbohydrate degradation; pentose phosphate pathway; D-ribulose 5-phosphate from D-glucose 6-phosphate (oxidative stage): step 2/3. Catalyzes the hydrolysis of 6-phosphogluconolactone to 6-phosphogluconate. Involved in the regulation of cellular redox state; enzymatic activity is required for this function. Required for sugar-dependent expression of nitrate assimilation genes in the nucleus of root cells. In Arabidopsis thaliana (Mouse-ear cress), this protein is 6-phosphogluconolactonase 3, chloroplastic.